We begin with the raw amino-acid sequence, 293 residues long: tRNA pseudouridine synthase B (293 aa).

Catalysis depends on aspartate 40, which acts as the Nucleophile.

This sequence belongs to the pseudouridine synthase TruB family. Type 1 subfamily.

The enzyme catalyses uridine(55) in tRNA = pseudouridine(55) in tRNA. Functionally, responsible for synthesis of pseudouridine from uracil-55 in the psi GC loop of transfer RNAs. This is tRNA pseudouridine synthase B from Mycolicibacterium paratuberculosis (strain ATCC BAA-968 / K-10) (Mycobacterium paratuberculosis).